The following is a 482-amino-acid chain: Glutamyl-tRNA(Gln) amidotransferase subunit A (482 aa).

Residues lysine 74 and serine 149 each act as charge relay system in the active site. Serine 173 acts as the Acyl-ester intermediate in catalysis.

It belongs to the amidase family. GatA subfamily. As to quaternary structure, heterotrimer of A, B and C subunits.

It catalyses the reaction L-glutamyl-tRNA(Gln) + L-glutamine + ATP + H2O = L-glutaminyl-tRNA(Gln) + L-glutamate + ADP + phosphate + H(+). Its function is as follows. Allows the formation of correctly charged Gln-tRNA(Gln) through the transamidation of misacylated Glu-tRNA(Gln) in organisms which lack glutaminyl-tRNA synthetase. The reaction takes place in the presence of glutamine and ATP through an activated gamma-phospho-Glu-tRNA(Gln). The polypeptide is Glutamyl-tRNA(Gln) amidotransferase subunit A (Prochlorococcus marinus (strain AS9601)).